The sequence spans 467 residues: 3-isopropylmalate dehydratase large subunit (467 aa).

[4Fe-4S] cluster is bound by residues C347, C407, and C410.

This sequence belongs to the aconitase/IPM isomerase family. LeuC type 1 subfamily. Heterodimer of LeuC and LeuD. The cofactor is [4Fe-4S] cluster.

It carries out the reaction (2R,3S)-3-isopropylmalate = (2S)-2-isopropylmalate. Its pathway is amino-acid biosynthesis; L-leucine biosynthesis; L-leucine from 3-methyl-2-oxobutanoate: step 2/4. In terms of biological role, catalyzes the isomerization between 2-isopropylmalate and 3-isopropylmalate, via the formation of 2-isopropylmaleate. The chain is 3-isopropylmalate dehydratase large subunit from Gloeothece citriformis (strain PCC 7424) (Cyanothece sp. (strain PCC 7424)).